A 116-amino-acid polypeptide reads, in one-letter code: Urease subunit beta (116 aa).

A disordered region spans residues 97–116; the sequence is IQGPLDAGTAETAPGLPQQP.

This sequence belongs to the urease beta subunit family. In terms of assembly, heterotrimer of UreA (gamma), UreB (beta) and UreC (alpha) subunits. Three heterotrimers associate to form the active enzyme.

Its subcellular location is the cytoplasm. The enzyme catalyses urea + 2 H2O + H(+) = hydrogencarbonate + 2 NH4(+). The protein operates within nitrogen metabolism; urea degradation; CO(2) and NH(3) from urea (urease route): step 1/1. The protein is Urease subunit beta of Paracidovorax citrulli (strain AAC00-1) (Acidovorax citrulli).